Consider the following 282-residue polypeptide: Peptidoglycan-recognition protein LD (282 aa).

Residues 1–29 (MDSSHIAVRVARRSPSPAAVSQSSYGSLG) are disordered. Residues 1 to 88 (MDSSHIAVRV…RRNPTLHEDC (88 aa)) are Cytoplasmic-facing. A helical transmembrane segment spans residues 89–111 (FNWRSVGLLVMCASALALAAYLL). At 112-282 (WRQTQTPDFG…PHYASHQTSK (171 aa)) the chain is on the extracellular side. A disulfide bridge links Cys-162 with Cys-166. A glycan (N-linked (GlcNAc...) asparagine) is linked at Asn-222.

The protein belongs to the N-acetylmuramoyl-L-alanine amidase 2 family. Expressed in uninduced hemocytes and mbn-2 cells.

It is found in the cell membrane. Peptidoglycan-recognition protein probably involved in innate immunity by binding to peptidoglycans (PGN) of bacteria and activating the immune response. The protein is Peptidoglycan-recognition protein LD (PGRP-LD) of Drosophila melanogaster (Fruit fly).